The primary structure comprises 139 residues: D-ribose pyranase (139 aa).

The Proton donor role is filled by His-20. Substrate is bound by residues Asp-28, His-106, and Tyr-128 to Asn-130.

The protein belongs to the RbsD / FucU family. RbsD subfamily. As to quaternary structure, homodecamer.

It is found in the cytoplasm. The enzyme catalyses beta-D-ribopyranose = beta-D-ribofuranose. It functions in the pathway carbohydrate metabolism; D-ribose degradation; D-ribose 5-phosphate from beta-D-ribopyranose: step 1/2. Functionally, catalyzes the interconversion of beta-pyran and beta-furan forms of D-ribose. The polypeptide is D-ribose pyranase (Vibrio parahaemolyticus serotype O3:K6 (strain RIMD 2210633)).